The chain runs to 155 residues: Large ribosomal subunit protein uL11 (155 aa).

The protein belongs to the universal ribosomal protein uL11 family. Part of the ribosomal stalk of the 50S ribosomal subunit. Interacts with L10 and the large rRNA to form the base of the stalk. L10 forms an elongated spine to which L12 dimers bind in a sequential fashion forming a multimeric L10(L12)X complex.

Its function is as follows. Forms part of the ribosomal stalk which helps the ribosome interact with GTP-bound translation factors. The protein is Large ribosomal subunit protein uL11 of Picrophilus torridus (strain ATCC 700027 / DSM 9790 / JCM 10055 / NBRC 100828 / KAW 2/3).